A 184-amino-acid polypeptide reads, in one-letter code: MATGPRYKVPMRRRREVRTDYHQRLRLLKSGKPRLVARVSNKHVRAQLVTPGPQGDETHAAATSADLDEYGWEAPTGNLPSAYLTGYLAGKRALAAGVEKAVLDIGLNTATPGNKVFAVQEGAIDAGLEIPHNDAVLADWDRNRGVHIAEYAEQLDEPLYSGEFDATNLPDHFDEVLGNLQEDE.

It belongs to the universal ribosomal protein uL18 family. Part of the 50S ribosomal subunit. Contacts the 5S and 23S rRNAs.

In terms of biological role, this is one of the proteins that bind and probably mediate the attachment of the 5S RNA into the large ribosomal subunit, where it forms part of the central protuberance. This Haloferax volcanii (strain ATCC 29605 / DSM 3757 / JCM 8879 / NBRC 14742 / NCIMB 2012 / VKM B-1768 / DS2) (Halobacterium volcanii) protein is Large ribosomal subunit protein uL18 (rpl18).